Reading from the N-terminus, the 809-residue chain is Leucine--tRNA ligase (809 aa).

The 'HIGH' region signature appears at 40–51; the sequence is PYPSGQGLHVGH. Residues 581–585 carry the 'KMSKS' region motif; the sequence is KMSKS. K584 provides a ligand contact to ATP.

The protein belongs to the class-I aminoacyl-tRNA synthetase family.

Its subcellular location is the cytoplasm. The catalysed reaction is tRNA(Leu) + L-leucine + ATP = L-leucyl-tRNA(Leu) + AMP + diphosphate. This is Leucine--tRNA ligase from Levilactobacillus brevis (strain ATCC 367 / BCRC 12310 / CIP 105137 / JCM 1170 / LMG 11437 / NCIMB 947 / NCTC 947) (Lactobacillus brevis).